Here is a 157-residue protein sequence, read N- to C-terminus: Phosphopantetheine adenylyltransferase (157 aa).

S9 lines the substrate pocket. Residues 9 to 10 (SF) and H17 each bind ATP. Substrate is bound by residues K41, L73, and K87. Residues 88–90 (GLR), E98, and 123–129 (YSFLSSS) each bind ATP.

It belongs to the bacterial CoaD family. Homohexamer. The cofactor is Mg(2+).

The protein localises to the cytoplasm. The enzyme catalyses (R)-4'-phosphopantetheine + ATP + H(+) = 3'-dephospho-CoA + diphosphate. It functions in the pathway cofactor biosynthesis; coenzyme A biosynthesis; CoA from (R)-pantothenate: step 4/5. In terms of biological role, reversibly transfers an adenylyl group from ATP to 4'-phosphopantetheine, yielding dephospho-CoA (dPCoA) and pyrophosphate. The protein is Phosphopantetheine adenylyltransferase of Alkaliphilus oremlandii (strain OhILAs) (Clostridium oremlandii (strain OhILAs)).